The sequence spans 370 residues: Lysophosphatidic acid receptor 4 (370 aa).

At 1-43 the chain is on the extracellular side; it reads MGDRRFIDFQFQDSNSSLRPRLGNATANNTCIVDDSFKYNLNG. 3 N-linked (GlcNAc...) asparagine glycosylation sites follow: asparagine 15, asparagine 24, and asparagine 28. The helical transmembrane segment at 44-64 threads the bilayer; that stretch reads AVYSVVFILGLITNSVSLFVF. Topologically, residues 65-73 are cytoplasmic; that stretch reads CFRMKMRSE. Residues 74 to 94 form a helical membrane-spanning segment; it reads TAIFITNLAVSDLLFVCTLPF. Residues 95–112 are Extracellular-facing; it reads KIFYNFNRHWPFGDTLCK. Cysteine 111 and cysteine 188 are disulfide-bonded. The chain crosses the membrane as a helical span at residues 113-133; it reads ISGTAFLTNIYGSMLFLTCIS. Over 134–155 the chain is Cytoplasmic; that stretch reads VDRFLAIVYPFRSRTIRTRRNS. A helical membrane pass occupies residues 156-176; it reads AIVCAGVWILVLSGGISASLF. Over 177 to 203 the chain is Extracellular; that stretch reads STTNVNNATTTCFEGFSKRVWKTYLSK. Residue asparagine 183 is glycosylated (N-linked (GlcNAc...) asparagine). Residues 204–224 traverse the membrane as a helical segment; it reads ITIFIEVVGFIIPLILNVSCS. Topologically, residues 225–254 are cytoplasmic; that stretch reads SVVLRTLRKPATLSQIGTNKKKVLKMITVH. Residues 255–275 traverse the membrane as a helical segment; sequence MAVFVVCFVPYNSVLFLYALV. The Extracellular segment spans residues 276–294; the sequence is RSQAITNCFLERFAKIMYP. The helical transmembrane segment at 295–315 threads the bilayer; it reads ITLCLATLNCCFDPFIYYFTL. The Cytoplasmic portion of the chain corresponds to 316–370; it reads ESFQKSFYINAHIRMESLFKTETPLTTKPSLPAIQEEVSDQTTNNGGELMLESTF.

It belongs to the G-protein coupled receptor 1 family. In terms of tissue distribution, high expression in ovary. Not detected in the brain regions thalamus, putamen, caudate, frontal cortex, pons, hypothalamus and hippocampus.

It is found in the cell membrane. Receptor for lysophosphatidic acid (LPA), a mediator of diverse cellular activities. Transduces a signal by increasing the intracellular calcium ions and by stimulating adenylyl cyclase activity. The rank order of potency for agonists of this receptor is 1-oleoyl- &gt; 1-stearoyl- &gt; 1-palmitoyl- &gt; 1-myristoyl- &gt; 1-alkyl- &gt; 1-alkenyl-LPA. This is Lysophosphatidic acid receptor 4 (LPAR4) from Homo sapiens (Human).